The primary structure comprises 120 residues: Small ribosomal subunit protein uS13 (120 aa).

A disordered region spans residues 92–120 (HRKGLPVRGQTTKNNARTRKGKKKTVGSK). Residues 107–120 (ARTRKGKKKTVGSK) are compositionally biased toward basic residues.

This sequence belongs to the universal ribosomal protein uS13 family. In terms of assembly, part of the 30S ribosomal subunit. Forms a loose heterodimer with protein S19. Forms two bridges to the 50S subunit in the 70S ribosome.

Located at the top of the head of the 30S subunit, it contacts several helices of the 16S rRNA. In the 70S ribosome it contacts the 23S rRNA (bridge B1a) and protein L5 of the 50S subunit (bridge B1b), connecting the 2 subunits; these bridges are implicated in subunit movement. Contacts the tRNAs in the A and P-sites. This is Small ribosomal subunit protein uS13 from Helicobacter hepaticus (strain ATCC 51449 / 3B1).